The primary structure comprises 358 residues: Nicotinate-nucleotide--dimethylbenzimidazole phosphoribosyltransferase (358 aa).

Glu-314 acts as the Proton acceptor in catalysis.

It belongs to the CobT family.

The catalysed reaction is 5,6-dimethylbenzimidazole + nicotinate beta-D-ribonucleotide = alpha-ribazole 5'-phosphate + nicotinate + H(+). It functions in the pathway nucleoside biosynthesis; alpha-ribazole biosynthesis; alpha-ribazole from 5,6-dimethylbenzimidazole: step 1/2. Catalyzes the synthesis of alpha-ribazole-5'-phosphate from nicotinate mononucleotide (NAMN) and 5,6-dimethylbenzimidazole (DMB). The protein is Nicotinate-nucleotide--dimethylbenzimidazole phosphoribosyltransferase of Mycobacterium marinum (strain ATCC BAA-535 / M).